Consider the following 248-residue polypeptide: 4-hydroxy-tetrahydrodipicolinate reductase (248 aa).

NAD(+) contacts are provided by residues 9–14, 77–79, and 104–107; these read GAKGRV, GTT, and APNF. Histidine 134 (proton donor/acceptor) is an active-site residue. Histidine 135 contributes to the (S)-2,3,4,5-tetrahydrodipicolinate binding site. The Proton donor role is filled by lysine 138. A (S)-2,3,4,5-tetrahydrodipicolinate-binding site is contributed by 144–145; that stretch reads GT.

Belongs to the DapB family.

It is found in the cytoplasm. It carries out the reaction (S)-2,3,4,5-tetrahydrodipicolinate + NAD(+) + H2O = (2S,4S)-4-hydroxy-2,3,4,5-tetrahydrodipicolinate + NADH + H(+). It catalyses the reaction (S)-2,3,4,5-tetrahydrodipicolinate + NADP(+) + H2O = (2S,4S)-4-hydroxy-2,3,4,5-tetrahydrodipicolinate + NADPH + H(+). It participates in amino-acid biosynthesis; L-lysine biosynthesis via DAP pathway; (S)-tetrahydrodipicolinate from L-aspartate: step 4/4. Its function is as follows. Catalyzes the conversion of 4-hydroxy-tetrahydrodipicolinate (HTPA) to tetrahydrodipicolinate. The chain is 4-hydroxy-tetrahydrodipicolinate reductase from Corynebacterium glutamicum (strain ATCC 13032 / DSM 20300 / JCM 1318 / BCRC 11384 / CCUG 27702 / LMG 3730 / NBRC 12168 / NCIMB 10025 / NRRL B-2784 / 534).